We begin with the raw amino-acid sequence, 175 residues long: Co-chaperone protein HscB homolog (175 aa).

The J domain occupies 2 to 76 (NYFALFNLTP…RAEHMLELRG (75 aa)).

It belongs to the HscB family. In terms of assembly, interacts with HscA and stimulates its ATPase activity.

In terms of biological role, co-chaperone involved in the maturation of iron-sulfur cluster-containing proteins. Seems to help targeting proteins to be folded toward HscA. The polypeptide is Co-chaperone protein HscB homolog (Pseudoalteromonas atlantica (strain T6c / ATCC BAA-1087)).